The primary structure comprises 103 residues: MELIEQVSVAKKANIYFEGKVASRSVFFSDGSKKTLGVVLPGEYEFSTSQGEIMQVTSGSFEVLLPNSTTWQTFSEGSQFELAANVSFKIRNNAIAEYCCSYL.

The protein belongs to the nucleoside phosphorylase PpnP family.

It catalyses the reaction a purine D-ribonucleoside + phosphate = a purine nucleobase + alpha-D-ribose 1-phosphate. The catalysed reaction is adenosine + phosphate = alpha-D-ribose 1-phosphate + adenine. The enzyme catalyses cytidine + phosphate = cytosine + alpha-D-ribose 1-phosphate. It carries out the reaction guanosine + phosphate = alpha-D-ribose 1-phosphate + guanine. It catalyses the reaction inosine + phosphate = alpha-D-ribose 1-phosphate + hypoxanthine. The catalysed reaction is thymidine + phosphate = 2-deoxy-alpha-D-ribose 1-phosphate + thymine. The enzyme catalyses uridine + phosphate = alpha-D-ribose 1-phosphate + uracil. It carries out the reaction xanthosine + phosphate = alpha-D-ribose 1-phosphate + xanthine. Functionally, catalyzes the phosphorolysis of diverse nucleosides, yielding D-ribose 1-phosphate and the respective free bases. Can use uridine, adenosine, guanosine, cytidine, thymidine, inosine and xanthosine as substrates. Also catalyzes the reverse reactions. This is Pyrimidine/purine nucleoside phosphorylase from Shewanella sp. (strain ANA-3).